Here is a 51-residue protein sequence, read N- to C-terminus: MARYRCCLTHSGSRCRRRRRRRCRRRRRRFGRRRRRRVCCRRYTVIRCTRQ.

2 cysteine pairs are disulfide-bonded: cysteine 7-cysteine 15 and cysteine 40-cysteine 48.

Belongs to the protamine P1 family. As to quaternary structure, cross-linked by interchain disulfide bonds around the DNA-helix. Phosphorylated by SRPK1. As to expression, testis.

It is found in the nucleus. Its subcellular location is the chromosome. Functionally, protamines substitute for histones in the chromatin of sperm during the haploid phase of spermatogenesis. They compact sperm DNA into a highly condensed, stable and inactive complex. This is Sperm protamine P1 (PRM1) from Bos taurus (Bovine).